An 870-amino-acid polypeptide reads, in one-letter code: Probable coatomer subunit gamma (870 aa).

6 HEAT repeats span residues 60 to 97 (TEAT…VSDD), 99 to 133 (IIVT…TGML), 168 to 205 (EVVR…NDRL), 278 to 315 (SEIQ…AHPN), 316 to 350 (AVMS…GAES), and 389 to 425 (HTVM…ENPD).

Belongs to the COPG family. Oligomeric complex that consists of at least the alpha, beta, beta', gamma, delta, epsilon and zeta subunits.

The protein localises to the cytoplasm. It localises to the golgi apparatus membrane. The protein resides in the cytoplasmic vesicle. Its subcellular location is the COPI-coated vesicle membrane. Its function is as follows. The coatomer is a cytosolic protein complex that binds to dilysine motifs and reversibly associates with Golgi non-clathrin-coated vesicles, which further mediate biosynthetic protein transport from the ER, via the Golgi up to the trans Golgi network. Coatomer complex is required for budding from Golgi membranes, and is essential for the retrograde Golgi-to-ER transport of dilysine-tagged proteins. The protein is Probable coatomer subunit gamma of Caenorhabditis elegans.